A 57-amino-acid chain; its full sequence is Alpha-conotoxin-like Sm1.2 (57 aa).

A signal peptide spans 1-16; it reads MFTVFLLVVLATTVVS. Residues 17–42 constitute a propeptide that is removed on maturation; the sequence is FPSDRESDGANDEARTDEPEEHGPDR. The interval 17-46 is disordered; the sequence is FPSDRESDGANDEARTDEPEEHGPDRNGCC. The segment covering 19 to 41 has biased composition (basic and acidic residues); the sequence is SDRESDGANDEARTDEPEEHGPD. 2 disulfide bridges follow: cysteine 45/cysteine 51 and cysteine 46/cysteine 56. Cysteine amide is present on cysteine 56.

It belongs to the conotoxin A superfamily. In terms of tissue distribution, expressed by the venom duct.

It is found in the secreted. Functionally, alpha-conotoxins act on postsynaptic membranes, they bind to the nicotinic acetylcholine receptors (nAChR) and thus inhibit them. The polypeptide is Alpha-conotoxin-like Sm1.2 (Conus stercusmuscarum (Fly-specked cone)).